Consider the following 124-residue polypeptide: Small ribosomal subunit protein uS12 (124 aa).

D89 bears the 3-methylthioaspartic acid mark.

This sequence belongs to the universal ribosomal protein uS12 family. In terms of assembly, part of the 30S ribosomal subunit. Contacts proteins S8 and S17. May interact with IF1 in the 30S initiation complex.

Its function is as follows. With S4 and S5 plays an important role in translational accuracy. Interacts with and stabilizes bases of the 16S rRNA that are involved in tRNA selection in the A site and with the mRNA backbone. Located at the interface of the 30S and 50S subunits, it traverses the body of the 30S subunit contacting proteins on the other side and probably holding the rRNA structure together. The combined cluster of proteins S8, S12 and S17 appears to hold together the shoulder and platform of the 30S subunit. In Sodalis glossinidius (strain morsitans), this protein is Small ribosomal subunit protein uS12.